We begin with the raw amino-acid sequence, 489 residues long: Betaine aldehyde dehydrogenase (489 aa).

Residues Thr26 and Asp93 each contribute to the K(+) site. An NAD(+)-binding site is contributed by 150–152 (GAW). The active-site Charge relay system is Lys162. Residue 176–179 (KPSE) participates in NAD(+) binding. Position 180 (Val180) interacts with K(+). 229–232 (GVET) lines the NAD(+) pocket. Leu245 provides a ligand contact to K(+). Catalysis depends on Glu251, which acts as the Proton acceptor. Residues Gly253, Cys285, and Glu386 each coordinate NAD(+). The active-site Nucleophile is the Cys285. Residue Cys285 is modified to Cysteine sulfenic acid (-SOH). K(+) is bound by residues Lys456 and Gly459. The Charge relay system role is filled by Glu463.

Belongs to the aldehyde dehydrogenase family. As to quaternary structure, dimer of dimers. K(+) serves as cofactor.

It carries out the reaction betaine aldehyde + NAD(+) + H2O = glycine betaine + NADH + 2 H(+). The protein operates within amine and polyamine biosynthesis; betaine biosynthesis via choline pathway; betaine from betaine aldehyde: step 1/1. Its function is as follows. Involved in the biosynthesis of the osmoprotectant glycine betaine. Catalyzes the irreversible oxidation of betaine aldehyde to the corresponding acid. In Burkholderia orbicola (strain AU 1054), this protein is Betaine aldehyde dehydrogenase.